Consider the following 744-residue polypeptide: NAD(P)H-quinone oxidoreductase subunit 5, chloroplastic (744 aa).

A run of 16 helical transmembrane segments spans residues 9–29, 41–61, 89–109, 125–145, 147–167, 185–205, 219–239, 258–278, 280–300, 327–347, 354–374, 396–416, 425–445, 546–566, 600–620, and 722–742; these read WIMP…LLLF, AFPT…FFIL, VDPL…TVLI, FSYM…SNLI, IYIC…FWFT, GDFS…SFEF, NEIP…GALA, TPIS…FLVA, LLPL…IGII, LGYM…FHLI, ALLF…VGYS, TSFL…CFWS, WLYS…TAFY, LFPM…GIPF, FIPN…IASV, and LLLY…LYLF.

It belongs to the complex I subunit 5 family. In terms of assembly, NDH is composed of at least 16 different subunits, 5 of which are encoded in the nucleus.

It localises to the plastid. Its subcellular location is the chloroplast thylakoid membrane. It carries out the reaction a plastoquinone + NADH + (n+1) H(+)(in) = a plastoquinol + NAD(+) + n H(+)(out). The enzyme catalyses a plastoquinone + NADPH + (n+1) H(+)(in) = a plastoquinol + NADP(+) + n H(+)(out). In terms of biological role, NDH shuttles electrons from NAD(P)H:plastoquinone, via FMN and iron-sulfur (Fe-S) centers, to quinones in the photosynthetic chain and possibly in a chloroplast respiratory chain. The immediate electron acceptor for the enzyme in this species is believed to be plastoquinone. Couples the redox reaction to proton translocation, and thus conserves the redox energy in a proton gradient. The protein is NAD(P)H-quinone oxidoreductase subunit 5, chloroplastic (ndhF) of Pelargonium hortorum (Common geranium).